The following is a 267-amino-acid chain: Neural/ectodermal development factor IMP-L2 (267 aa).

Positions Met1–Gly25 are cleaved as a signal peptide. Ig-like C2-type domains follow at residues Pro48 to Tyr149 and Pro174 to Tyr260. Cystine bridges form between Cys80–Cys139 and Cys195–Cys244.

Detected in several sites including the ventral neuroectoderm, the tracheal pits, the pharynx and esophagus, and specific neuronal cell bodies, where it is primarily expressed.

It is found in the secreted. It localises to the extracellular space. Its function is as follows. Essential developmental role during embryogenesis, in particular the normal development of the nervous system. May be involved in some aspect of cell adhesion. This chain is Neural/ectodermal development factor IMP-L2 (ImpL2), found in Drosophila melanogaster (Fruit fly).